The primary structure comprises 141 residues: Pyrophosphate-energized proton pump (141 aa).

The next 3 membrane-spanning stretches (helical) occupy residues G11–V31, G46–I66, and L121–I141.

It belongs to the H(+)-translocating pyrophosphatase (TC 3.A.10) family. As to quaternary structure, homodimer. The cofactor is Mg(2+).

Its subcellular location is the cell inner membrane. The catalysed reaction is diphosphate + H2O + H(+)(in) = 2 phosphate + 2 H(+)(out). In terms of biological role, proton pump that utilizes the energy of pyrophosphate hydrolysis as the driving force for proton movement across the membrane. Generates a proton motive force. The sequence is that of Pyrophosphate-energized proton pump (hppA) from Anaplasma marginale.